Reading from the N-terminus, the 620-residue chain is Chaperone protein HtpG (620 aa).

Positions 1–334 are a; substrate-binding; sequence MTTTDTAPQT…SEDLPLNLSR (334 aa). The segment at 335 to 548 is b; sequence EMLQNNPQLV…GQGPDRALER (214 aa). The c stretch occupies residues 549 to 620; it reads MLAQQNRGGA…RINRLVLRAL (72 aa).

This sequence belongs to the heat shock protein 90 family. Homodimer.

It localises to the cytoplasm. In terms of biological role, molecular chaperone. Has ATPase activity. This chain is Chaperone protein HtpG, found in Rhodopseudomonas palustris (strain BisA53).